Here is a 274-residue protein sequence, read N- to C-terminus: Large ribosomal subunit protein uL2c (274 aa).

2 disordered regions span residues 1–22 (MAIHLYKTSTPSTRNGAVDNQV) and 225–274 (PVDH…RRSK).

Belongs to the universal ribosomal protein uL2 family. Part of the 50S ribosomal subunit.

It is found in the plastid. It localises to the chloroplast. This chain is Large ribosomal subunit protein uL2c (rpl2), found in Silene latifolia (White campion).